Reading from the N-terminus, the 358-residue chain is Bis(monoacylglycero)phosphate synthase CLN5 (358 aa).

The segment at 1–23 is disordered; sequence MAQVGSAGPGACGRRGAGAGAGP. The Cytoplasmic portion of the chain corresponds to 1-29; the sequence is MAQVGSAGPGACGRRGAGAGAGPERTTWR. The segment covering 7 to 21 has biased composition (gly residues); sequence AGPGACGRRGAGAGA. The helical; Signal-anchor for type II membrane protein transmembrane segment at 30 to 46 threads the bilayer; the sequence is WAPALLWLATAAAVAGD. Over 47 to 358 the chain is Lumenal; sequence PSRRQWPVPY…NRKNRTLSGL (312 aa). Cystine bridges form between Cys-69/Cys-158 and Cys-76/Cys-164. The active-site Proton acceptor is His-116. N-linked (GlcNAc...) asparagine glycosylation is found at Asn-129, Asn-142, Asn-177, and Asn-202. Residue Cys-230 is the Nucleophile; Acyl-thioester intermediate of the active site. N-linked (GlcNAc...) asparagine glycosylation is found at Asn-254, Asn-270, and Asn-280. A membrane-anchoring region spans residues 303–342; the sequence is FLLSLLQIFDAVVIHREFYLFYNFEYWFLPMKYPFIKITY. A glycan (N-linked (GlcNAc...) asparagine) is linked at Asn-352.

Belongs to the CLN5 family. Multimer. Interacts with SORT1, RAB5A and RAB7A. Interacts with PPT1, TPP1, CLN3, CLN6, CLN8, ATP5F1A and ATP5F1B. In terms of processing, N-glycosylated with both high mannose and complex type sugars. Glycosylation is important for proper folding and trafficking to the lysosomes. Post-translationally, the type II membrane signal anchor is proteolytically cleaved to produce a mature form that is transported to the lysosomes (Bis(monoacylglycero)phosphate synthase CLN5, secreted form). Can undergo proteolytic cleavage at the C-terminus, probably by a cysteine protease and may involve the removal of approximately 10-15 residues from the C-terminal end.

Its subcellular location is the lysosome. It localises to the membrane. The enzyme catalyses S-hexadecanoyl-L-cysteinyl-[protein] + H2O = L-cysteinyl-[protein] + hexadecanoate + H(+). It carries out the reaction 2 1-acyl-sn-glycero-3-phospho-(1'-sn-glycerol) = 1-acyl-sn-glycero-3-phospho-(3'-acyl-sn-1'-glycerol) + sn-glycero-3-phospho-(1'-sn-glycerol). The catalysed reaction is 2 1-(9Z-octadecenoyl)-sn-glycero-3-phospho-(1'-sn-glycerol) = 1-(9Z-octadecenoyl)-sn-glycero-3-phospho-(3'-(9Z-octadecenoyl)-1'-sn-glycerol) + sn-glycero-3-phospho-(1'-sn-glycerol). It catalyses the reaction 2 1-octadecanoyl-sn-glycero-3-phospho-(1'-sn-glycerol) = 1-octadecanoyl-sn-glycero-3-phospho-(3'-octadecanoyl-1'-sn-glycerol) + sn-glycero-3-phospho-(1'-sn-glycerol). The enzyme catalyses 2 1-hexadecanoyl-sn-glycero-3-phospho-(1'-sn-glycerol) = 1-hexadecanoyl-sn-glycero-3-phospho-(3'-hexadecanoyl-1'-sn-glycerol) + sn-glycero-3-phospho-(1'-sn-glycerol). It carries out the reaction 2 1-tetradecanoyl-sn-glycero-3-phospho-(1'-sn-glycerol) = 1-tetradecanoyl-sn-glycero-3-phospho-(3'-tetradecanoyl-1'-sn-glycerol) + sn-glycero-3-phospho-(1'-sn-glycerol). Its function is as follows. Catalyzes the synthesis of bis(monoacylglycero)phosphate (BMP) via transacylation of 2 molecules of lysophosphatidylglycerol (LPG). BMP also known as lysobisphosphatidic acid plays a key role in the formation of intraluminal vesicles and in maintaining intracellular cholesterol homeostasis. Can use only LPG as the exclusive lysophospholipid acyl donor for base exchange and displays BMP synthase activity towards various LPGs (LPG 14:0, LPG 16:0, LPG 18:0, LPG 18:1) with a higher preference for longer chain lengths. Plays a role in influencing the retrograde trafficking of lysosomal sorting receptors SORT1 and IGF2R from the endosomes to the trans-Golgi network by controlling the recruitment of retromer complex to the endosomal membrane. Regulates the localization and activation of RAB7A which is required to recruit the retromer complex to the endosomal membrane. In terms of biological role, exhibits palmitoyl protein thioesterase (S-depalmitoylation) activity in vitro and most likely plays a role in protein S-depalmitoylation. The polypeptide is Bis(monoacylglycero)phosphate synthase CLN5 (CLN5) (Bos taurus (Bovine)).